The primary structure comprises 50 residues: Large ribosomal subunit protein bL32c (50 aa).

This sequence belongs to the bacterial ribosomal protein bL32 family.

The protein localises to the plastid. Its subcellular location is the chloroplast. The chain is Large ribosomal subunit protein bL32c from Lotus japonicus (Lotus corniculatus var. japonicus).